Consider the following 1040-residue polypeptide: Neprilysin-4 (1040 aa).

Residues 1-27 are disordered; sequence MSRHSQLKLAMPSVHGAPATAPGSPMN. Positions 1–45 are required for maintaining muscle integrity; the sequence is MSRHSQLKLAMPSVHGAPATAPGSPMNAKARSVKLGLGVNQRTGR. Residues 1-55 are Cytoplasmic-facing; it reads MSRHSQLKLAMPSVHGAPATAPGSPMNAKARSVKLGLGVNQRTGRVQWCPGLTCC. Residues 56–76 form a helical; Signal-anchor for type II membrane protein membrane-spanning segment; sequence KMLLLLPVVMLPLTLVLILIM. At 77–1040 the chain is on the extracellular side; the sequence is RLDGMLAALQ…MNPQKKCSVW (964 aa). The region spanning 251–1040 is the Peptidase M13 domain; it reads EEGTREGIRM…MNPQKKCSVW (790 aa). Cystine bridges form between Cys-277–Cys-1025, Cys-285–Cys-985, Cys-452–Cys-700, and Cys-909–Cys-1037. N-linked (GlcNAc...) asparagine glycans are attached at residues Asn-387, Asn-593, Asn-723, and Asn-819. His-872 is a binding site for Zn(2+). Glu-873 is a catalytic residue. Residue His-876 coordinates Zn(2+). Asn-916 carries an N-linked (GlcNAc...) asparagine glycan. Position 934 (Glu-934) interacts with Zn(2+). Asp-938 (proton donor) is an active-site residue. N-linked (GlcNAc...) asparagine glycosylation is present at Asn-969.

It belongs to the peptidase M13 family. As to quaternary structure, interacts (via intracellular domain) with the putative carbohydrate kinase CG3534. Zn(2+) serves as cofactor. As to expression, expressed in the gonads and testes of adults, and the adult and larval brain (at protein level). In embryos, expressed in the pericardial, muscle founder and glia cells (at protein level). In stage 12 embryos, expressed in specific dorsal muscle founder cells such as DA1 and DO2, and also in the certain pericardial progenitor cells where expression persists throughout embryogenesis. Expressed in the glia cells of the embryonic, larval and adult central nervous system. Expressed in the somatic muscles of larvae, pupae and adults. Isoform A: Detected in the male abdomen (at protein level). Isoform B: Not detected in the male or female abdomen (at protein level).

It is found in the cell membrane. The protein resides in the sarcoplasmic reticulum. Its subcellular location is the cytoplasm. It catalyses the reaction Preferential cleavage of polypeptides between hydrophobic residues, particularly with Phe or Tyr at P1'.. Its function is as follows. Metalloendoprotease which cleaves peptides at the amino side of hydrophobic residues - such as the hormones Akh and Dh31, and the neuropeptides Allatostatins (AST1, AST2, AST3 and AST4), Crz, Drosulfakinins (DSK-I and DSK-II), Lk, sNPF and the tachykinin peptides TK-1, TK-2, TK-4 and TK-5. Functions in female fertility, memory formation and may also act in regulating insulin signaling and food intake. Likely to be involved in controlling feeding behavior and the expression of insulin-like peptides by cleaving various regulatory peptides that include certain Drosulfakinins, Allatostatins and tachykinin peptides. Required in females for normal patterns of egg laying and hatching. Required in the dorsal paired medial neurons for the proper formation of long-term (LTM) and middle-term memories (MTM). Also required in the mushroom body neurons where it functions redundantly with neprilysins Nep2 and Nep3, in normal LTM formation. Cleaves angiotensin-1 and tachykinin neuropeptide substance P. Functions in maintaining muscle integrity, possibly independently of its endopeptidase activity. This chain is Neprilysin-4, found in Drosophila melanogaster (Fruit fly).